The primary structure comprises 263 residues: uncharacterized protein (263 aa).

31–38 lines the ATP pocket; sequence GPTGSGKT.

This sequence belongs to the CbbQ/NirQ/NorQ/GpvN family.

This is an uncharacterized protein from Staphylococcus epidermidis (strain ATCC 35984 / DSM 28319 / BCRC 17069 / CCUG 31568 / BM 3577 / RP62A).